We begin with the raw amino-acid sequence, 180 residues long: Ribosome maturation factor RimM (180 aa).

Positions 103–176 constitute a PRC barrel domain; that stretch reads GDIWWDRDLV…RIVVDPPPGL (74 aa).

Belongs to the RimM family. Binds ribosomal protein uS19.

It is found in the cytoplasm. Its function is as follows. An accessory protein needed during the final step in the assembly of 30S ribosomal subunit, possibly for assembly of the head region. Essential for efficient processing of 16S rRNA. May be needed both before and after RbfA during the maturation of 16S rRNA. It has affinity for free ribosomal 30S subunits but not for 70S ribosomes. The polypeptide is Ribosome maturation factor RimM (Frankia alni (strain DSM 45986 / CECT 9034 / ACN14a)).